We begin with the raw amino-acid sequence, 470 residues long: Maltose fermentation regulatory protein YPR196W (470 aa).

The segment at residues 8–34 (CDCCRVRRVKCDRNRPCDRCRQRNLRC) is a DNA-binding region (zn(2)-C6 fungal-type). The short motif at 41–49 (RKRGPKSIG) is the Nuclear localization signal element.

Belongs to the MAL13 family.

It localises to the nucleus. In terms of biological role, may regulate the transcription of maltase and maltose permease genes. The sequence is that of Maltose fermentation regulatory protein YPR196W from Saccharomyces cerevisiae (strain ATCC 204508 / S288c) (Baker's yeast).